The sequence spans 414 residues: Imidazolonepropionase (414 aa).

Positions 73 and 75 each coordinate Fe(3+). His-73 and His-75 together coordinate Zn(2+). Positions 82, 145, and 178 each coordinate 4-imidazolone-5-propanoate. Tyr-145 contributes to the N-formimidoyl-L-glutamate binding site. A Fe(3+)-binding site is contributed by His-249. His-249 provides a ligand contact to Zn(2+). Gln-252 is a 4-imidazolone-5-propanoate binding site. Position 324 (Asp-324) interacts with Fe(3+). Residue Asp-324 coordinates Zn(2+). Residues Asn-326 and Gly-328 each coordinate N-formimidoyl-L-glutamate. Ser-329 serves as a coordination point for 4-imidazolone-5-propanoate.

Belongs to the metallo-dependent hydrolases superfamily. HutI family. Zn(2+) serves as cofactor. It depends on Fe(3+) as a cofactor.

The protein localises to the cytoplasm. It carries out the reaction 4-imidazolone-5-propanoate + H2O = N-formimidoyl-L-glutamate. Its pathway is amino-acid degradation; L-histidine degradation into L-glutamate; N-formimidoyl-L-glutamate from L-histidine: step 3/3. Functionally, catalyzes the hydrolytic cleavage of the carbon-nitrogen bond in imidazolone-5-propanoate to yield N-formimidoyl-L-glutamate. It is the third step in the universal histidine degradation pathway. The protein is Imidazolonepropionase of Shewanella denitrificans (strain OS217 / ATCC BAA-1090 / DSM 15013).